The following is a 390-amino-acid chain: Phosphopentomutase (390 aa).

D9, D283, H288, D324, H325, and H336 together coordinate Mn(2+).

This sequence belongs to the phosphopentomutase family. Requires Mn(2+) as cofactor.

The protein localises to the cytoplasm. It carries out the reaction 2-deoxy-alpha-D-ribose 1-phosphate = 2-deoxy-D-ribose 5-phosphate. The catalysed reaction is alpha-D-ribose 1-phosphate = D-ribose 5-phosphate. It participates in carbohydrate degradation; 2-deoxy-D-ribose 1-phosphate degradation; D-glyceraldehyde 3-phosphate and acetaldehyde from 2-deoxy-alpha-D-ribose 1-phosphate: step 1/2. Isomerase that catalyzes the conversion of deoxy-ribose 1-phosphate (dRib-1-P) and ribose 1-phosphate (Rib-1-P) to deoxy-ribose 5-phosphate (dRib-5-P) and ribose 5-phosphate (Rib-5-P), respectively. This chain is Phosphopentomutase, found in Thermotoga maritima (strain ATCC 43589 / DSM 3109 / JCM 10099 / NBRC 100826 / MSB8).